Here is a 510-residue protein sequence, read N- to C-terminus: Maturase K (510 aa).

It belongs to the intron maturase 2 family. MatK subfamily.

The protein resides in the plastid. It localises to the chloroplast. In terms of biological role, usually encoded in the trnK tRNA gene intron. Probably assists in splicing its own and other chloroplast group II introns. This is Maturase K from Populus alba (White poplar).